The sequence spans 509 residues: Protein MAIN-LIKE 1 (509 aa).

The disordered stretch occupies residues 477–509; that stretch reads GYGKRRRRNEHTPTPNNGGGNDISSLLLQKEDS. Over residues 488–503 the composition is skewed to polar residues; sequence TPTPNNGGGNDISSLL.

In terms of tissue distribution, expressed in root tips, the shoot apical meristem (SAM), leaves, mature flowers and embryos.

The protein resides in the nucleus. In terms of biological role, acts as an important factor for cell fate determination and maintenance throughout plant development. Required for the organization of the root apical meristem (RAM) and the shoot apical meristem (SAM). Required to maintain genome stability and cell division activity in meristematic cells. This chain is Protein MAIN-LIKE 1, found in Arabidopsis thaliana (Mouse-ear cress).